Reading from the N-terminus, the 763-residue chain is Phosphoglycerol transferase I (763 aa).

Helical transmembrane passes span 1 to 21 (MSEL…AWKA), 26 to 46 (WWFA…ITLY), 77 to 97 (ILPG…LGWV), and 108 to 128 (VGYS…SPAF).

Belongs to the OpgB family.

The protein resides in the cell inner membrane. It catalyses the reaction a phosphatidylglycerol + a membrane-derived-oligosaccharide D-glucose = a 1,2-diacyl-sn-glycerol + a membrane-derived-oligosaccharide 6-(glycerophospho)-D-glucose.. Its pathway is glycan metabolism; osmoregulated periplasmic glucan (OPG) biosynthesis. Transfers a phosphoglycerol residue from phosphatidylglycerol to the membrane-bound nascent glucan backbones. The chain is Phosphoglycerol transferase I from Salmonella choleraesuis (strain SC-B67).